A 178-amino-acid polypeptide reads, in one-letter code: uncharacterized protein (178 aa).

5 helical membrane passes run 13-33 (GIVL…FFMP), 48-68 (MLNA…LIMI), 80-100 (ILAA…YHSI), 115-135 (IYFF…PLAL), and 155-175 (WTMP…LMIS).

The protein localises to the cell membrane. This is an uncharacterized protein from Bacillus subtilis (strain 168).